The chain runs to 156 residues: MNPQRRRRLWLVLALVLAGGLATTLVAMALQRNVAYLYTPSEVLRGDAGAHSRFRLGGMVEKGSFKRASGSLEAQFRVTDGDAQLSVSYDRILPDLFREGQAVVATGRMQHGIFVAEDVLAKHDETYMPKEVADKMGSAHRKHDVPAAAGQVGERQ.

At 1 to 8 (MNPQRRRR) the chain is on the cytoplasmic side. The chain crosses the membrane as a helical; Signal-anchor for type II membrane protein span at residues 9–29 (LWLVLALVLAGGLATTLVAMA). Residues 30 to 156 (LQRNVAYLYT…AAAGQVGERQ (127 aa)) are Periplasmic-facing. Histidine 123 and tyrosine 127 together coordinate heme. Residues 136–156 (MGSAHRKHDVPAAAGQVGERQ) are disordered.

This sequence belongs to the CcmE/CycJ family.

The protein localises to the cell inner membrane. In terms of biological role, heme chaperone required for the biogenesis of c-type cytochromes. Transiently binds heme delivered by CcmC and transfers the heme to apo-cytochromes in a process facilitated by CcmF and CcmH. The polypeptide is Cytochrome c-type biogenesis protein CcmE 2 (Xanthomonas axonopodis pv. citri (strain 306)).